The primary structure comprises 152 residues: Mitochondrial fission 1 protein (152 aa).

Met-1 is subject to N-acetylmethionine. Residues 1–122 (MEAVLNELVS…LIDKAMKKDG (122 aa)) are Cytoplasmic-facing. At Ser-10 the chain carries Phosphoserine. One copy of the TPR repeat lies at 71–104 (RDYVFYLAVGNYRLKEYEKALKYVRGLLQTEPQN). Residues 123–143 (LVGMAIVGGMALGVAGLAGLI) form a helical membrane-spanning segment. Residues 144–152 (GLAVSKSKS) lie on the Mitochondrial intermembrane side of the membrane.

The protein belongs to the FIS1 family. Interacts with DNM1L/DLP1 through the TPR region; may form part of a larger protein complex at the endoplasmic reticulum-mitochondrial interface during mitochondrial fission. Interacts with MARCHF5. Interacts with MIEF1. Interacts with PEX11A, PEX11B and PEX11G. In terms of processing, ubiquitinated by MARCHF5.

It localises to the mitochondrion outer membrane. Its subcellular location is the peroxisome membrane. Involved in the fragmentation of the mitochondrial network and its perinuclear clustering. Plays a minor role in the recruitment and association of the fission mediator dynamin-related protein 1 (DNM1L) to the mitochondrial surface and mitochondrial fission. May not be essential for the assembly of functional fission complexes and the subsequent membrane scission event. Also mediates peroxisomal fission. May act when the products of fission are directed toward mitochondrial homeostasis, mitophagy, or apoptosis. Can induce cytochrome c release from the mitochondrion to the cytosol, ultimately leading to apoptosis. The chain is Mitochondrial fission 1 protein (Fis1) from Mus musculus (Mouse).